A 238-amino-acid chain; its full sequence is ATP synthase subunit a (238 aa).

Helical transmembrane passes span 17-37, 75-95, 112-132, 172-192, and 194-214; these read LSNILMITVTCVIVLLIAIIC, FHVLGITILMFVFVANMLGLP, DPIVTLTLAIMVLGLTHYYGI, YGNIFAGEVLLTIIATQLAHI, and IFVGVLAIIPAIIWQAFSLFI.

It belongs to the ATPase A chain family. In terms of assembly, F-type ATPases have 2 components, CF(1) - the catalytic core - and CF(0) - the membrane proton channel. CF(1) has five subunits: alpha(3), beta(3), gamma(1), delta(1), epsilon(1). CF(0) has three main subunits: a(1), b(2) and c(9-12). The alpha and beta chains form an alternating ring which encloses part of the gamma chain. CF(1) is attached to CF(0) by a central stalk formed by the gamma and epsilon chains, while a peripheral stalk is formed by the delta and b chains.

The protein resides in the cell membrane. Its function is as follows. Key component of the proton channel; it plays a direct role in the translocation of protons across the membrane. The protein is ATP synthase subunit a of Listeria monocytogenes serovar 1/2a (strain ATCC BAA-679 / EGD-e).